The following is a 184-amino-acid chain: ATP synthase subunit b, chloroplastic (184 aa).

Residues 27–49 (LATNPINLSVVFGVLIFFGKGVL) form a helical membrane-spanning segment.

Belongs to the ATPase B chain family. In terms of assembly, F-type ATPases have 2 components, F(1) - the catalytic core - and F(0) - the membrane proton channel. F(1) has five subunits: alpha(3), beta(3), gamma(1), delta(1), epsilon(1). F(0) has four main subunits: a(1), b(1), b'(1) and c(10-14). The alpha and beta chains form an alternating ring which encloses part of the gamma chain. F(1) is attached to F(0) by a central stalk formed by the gamma and epsilon chains, while a peripheral stalk is formed by the delta, b and b' chains.

The protein resides in the plastid. It is found in the chloroplast thylakoid membrane. Its function is as follows. F(1)F(0) ATP synthase produces ATP from ADP in the presence of a proton or sodium gradient. F-type ATPases consist of two structural domains, F(1) containing the extramembraneous catalytic core and F(0) containing the membrane proton channel, linked together by a central stalk and a peripheral stalk. During catalysis, ATP synthesis in the catalytic domain of F(1) is coupled via a rotary mechanism of the central stalk subunits to proton translocation. In terms of biological role, component of the F(0) channel, it forms part of the peripheral stalk, linking F(1) to F(0). In Crucihimalaya wallichii (Rock-cress), this protein is ATP synthase subunit b, chloroplastic.